The following is a 322-amino-acid chain: Cytochrome c biogenesis protein CcsA (322 aa).

8 helical membrane-spanning segments follow: residues N19–V39, L43–L63, F72–I92, V104–L124, M150–L170, T230–N250, T264–L281, and A291–L311.

The protein belongs to the CcmF/CycK/Ccl1/NrfE/CcsA family. As to quaternary structure, may interact with Ccs1.

It localises to the plastid. It is found in the chloroplast thylakoid membrane. In terms of biological role, required during biogenesis of c-type cytochromes (cytochrome c6 and cytochrome f) at the step of heme attachment. In Heterosigma akashiwo (strain NIES-293 / 8280G21-1), this protein is Cytochrome c biogenesis protein CcsA.